The chain runs to 263 residues: HTH-type transcriptional repressor NanR (263 aa).

A disordered region spans residues 1 to 22 (MGLMNAFDSQTEDSSPAIGRNL). The region spanning 30–98 (KKLSEMVEEE…NGERARVSRP (69 aa)) is the HTH gntR-type domain. The H-T-H motif DNA-binding region spans 58 to 77 (ERELMAFFNVGRPSVREALA).

It belongs to the NanR family.

Functionally, transcriptional repressor that controls expression of the genes required for the catabolism of sialic acids. This Shigella dysenteriae serotype 1 (strain Sd197) protein is HTH-type transcriptional repressor NanR.